Here is a 569-residue protein sequence, read N- to C-terminus: Oxygen-dependent choline dehydrogenase (569 aa).

Residue 9–38 (DYVIIGGGSAGSVLGNRLSEDKDKEVLVLE) coordinates FAD. His475 acts as the Proton acceptor in catalysis.

The protein belongs to the GMC oxidoreductase family. FAD is required as a cofactor.

The catalysed reaction is choline + A = betaine aldehyde + AH2. It catalyses the reaction betaine aldehyde + NAD(+) + H2O = glycine betaine + NADH + 2 H(+). It participates in amine and polyamine biosynthesis; betaine biosynthesis via choline pathway; betaine aldehyde from choline (cytochrome c reductase route): step 1/1. Functionally, involved in the biosynthesis of the osmoprotectant glycine betaine. Catalyzes the oxidation of choline to betaine aldehyde and betaine aldehyde to glycine betaine at the same rate. This is Oxygen-dependent choline dehydrogenase from Staphylococcus aureus (strain MSSA476).